A 302-amino-acid polypeptide reads, in one-letter code: tRNA-cytidine(32) 2-sulfurtransferase (302 aa).

The PP-loop motif motif lies at 43 to 48 (SGGKDS). Residues Cys-118, Cys-121, and Cys-209 each coordinate [4Fe-4S] cluster.

This sequence belongs to the TtcA family. Homodimer. Mg(2+) serves as cofactor. The cofactor is [4Fe-4S] cluster.

The protein localises to the cytoplasm. The enzyme catalyses cytidine(32) in tRNA + S-sulfanyl-L-cysteinyl-[cysteine desulfurase] + AH2 + ATP = 2-thiocytidine(32) in tRNA + L-cysteinyl-[cysteine desulfurase] + A + AMP + diphosphate + H(+). Its pathway is tRNA modification. Functionally, catalyzes the ATP-dependent 2-thiolation of cytidine in position 32 of tRNA, to form 2-thiocytidine (s(2)C32). The sulfur atoms are provided by the cysteine/cysteine desulfurase (IscS) system. This is tRNA-cytidine(32) 2-sulfurtransferase from Polynucleobacter asymbioticus (strain DSM 18221 / CIP 109841 / QLW-P1DMWA-1) (Polynucleobacter necessarius subsp. asymbioticus).